The following is a 722-amino-acid chain: MTELKPLLIELGTEELPVNALPNLSRAFFEGVLAGLERRGIVVDHGEAKSLSTPRRLAVLLTAVAVEQPKQYRELFGPYLNTAFDTEGKPTKALEGFAAKCGVNWRTLERIRDTKGERFVHRVVVPGERTDALLPGILTEAIAGMPIPKPMRWGAHEYLFARPVHWLVMLFGQDVVEAEIMGVKAGRISRGHRFLYDKPVSLSGPQNYIDVLQAAYVLVDPAARRARIVAEIEAVARQVGGVARITEDNVAQVVNLVEWPSAVLCSFERVFLEVPQEALIQTMEVNQKFFPVLDSLGKLTEKFIGIANIESNDVAEVAKGYERVIRPRFSDAKFFFNEDLKQGLKAMGERLRTVTYHAKLGTLADKVARVLVLAEAIAPQIGVDPLLARRVALLSKNDLQSRMVNEFPELQGVAGHHYALISGELPEVAMAIEDAYRPRFSGDEIARSPLGKVLGLAERLDTLACGFAVGMKPTGNKDPFGLRRNALGLARTIIESRFDLDLKVLLDQASDWVAFATTIEQERHAQESVKQSKKEAAVKHSVPQVSDEKSARIEELYDFIVERLRGYYADKGIPTTHFNAVAELKPVSLYDFHRRLDAIGRFAALPEAEALAVANKRIRNILRKAEIKIPASVDATLFDQPAESGLLVALEGVITDTRSALDCKNYVSVLTCLARLRPPIDEFFDKVMVNDENLMLRANRLALLQRLGEYLCCVAAIEHLSN.

This sequence belongs to the class-II aminoacyl-tRNA synthetase family. Tetramer of two alpha and two beta subunits.

It is found in the cytoplasm. It carries out the reaction tRNA(Gly) + glycine + ATP = glycyl-tRNA(Gly) + AMP + diphosphate. The sequence is that of Glycine--tRNA ligase beta subunit from Xylella fastidiosa (strain Temecula1 / ATCC 700964).